We begin with the raw amino-acid sequence, 215 residues long: Vesicle-trafficking protein SEC22b (215 aa).

Over Met1–Arg190 the chain is Cytoplasmic. The 114-residue stretch at Met6–Ile119 folds into the Longin domain. The v-SNARE coiled-coil homology domain maps to Asn134 to Ala194. The helical transmembrane segment at Ser191–Trp213 threads the bilayer. At Trp214–Leu215 the chain is on the lumenal side.

This sequence belongs to the synaptobrevin family. Component of 2 distinct SNARE complexes.

It is found in the endoplasmic reticulum membrane. It localises to the endoplasmic reticulum-Golgi intermediate compartment membrane. The protein resides in the golgi apparatus. The protein localises to the cis-Golgi network membrane. Its subcellular location is the trans-Golgi network membrane. It is found in the melanosome. Functionally, SNARE involved in targeting and fusion of ER-derived transport vesicles with the Golgi complex as well as Golgi-derived retrograde transport vesicles with the ER. In Xenopus tropicalis (Western clawed frog), this protein is Vesicle-trafficking protein SEC22b.